We begin with the raw amino-acid sequence, 148 residues long: Large ribosomal subunit protein bL9 (148 aa).

It belongs to the bacterial ribosomal protein bL9 family.

Its function is as follows. Binds to the 23S rRNA. This chain is Large ribosomal subunit protein bL9, found in Parafrankia sp. (strain EAN1pec).